The primary structure comprises 342 residues: Deoxyguanosinetriphosphate triphosphohydrolase-like protein (342 aa).

The 116-residue stretch at 75–190 (RLVHTLEVSQ…VRFADKIAYV (116 aa)) folds into the HD domain.

The protein belongs to the dGTPase family. Type 2 subfamily.

The chain is Deoxyguanosinetriphosphate triphosphohydrolase-like protein from Clostridium perfringens (strain SM101 / Type A).